Consider the following 213-residue polypeptide: Pyridoxine/pyridoxamine 5'-phosphate oxidase (213 aa).

Substrate-binding positions include 8–11 (RKNY) and Lys66. Residues 61 to 66 (RIVLIK), 76 to 77 (FT), Arg82, Lys83, and Gln105 contribute to the FMN site. Tyr123, Arg127, and Ser131 together coordinate substrate. FMN is bound by residues 140-141 (QS) and Trp184. 190–192 (RLH) contributes to the substrate binding site. Arg194 lines the FMN pocket.

This sequence belongs to the pyridoxamine 5'-phosphate oxidase family. As to quaternary structure, homodimer. The cofactor is FMN.

The enzyme catalyses pyridoxamine 5'-phosphate + O2 + H2O = pyridoxal 5'-phosphate + H2O2 + NH4(+). It carries out the reaction pyridoxine 5'-phosphate + O2 = pyridoxal 5'-phosphate + H2O2. It participates in cofactor metabolism; pyridoxal 5'-phosphate salvage; pyridoxal 5'-phosphate from pyridoxamine 5'-phosphate: step 1/1. It functions in the pathway cofactor metabolism; pyridoxal 5'-phosphate salvage; pyridoxal 5'-phosphate from pyridoxine 5'-phosphate: step 1/1. In terms of biological role, catalyzes the oxidation of either pyridoxine 5'-phosphate (PNP) or pyridoxamine 5'-phosphate (PMP) into pyridoxal 5'-phosphate (PLP). This is Pyridoxine/pyridoxamine 5'-phosphate oxidase from Paraburkholderia xenovorans (strain LB400).